We begin with the raw amino-acid sequence, 72 residues long: Large ribosomal subunit protein bL31 (72 aa).

Belongs to the bacterial ribosomal protein bL31 family. Type A subfamily. In terms of assembly, part of the 50S ribosomal subunit.

Binds the 23S rRNA. This Maricaulis maris (strain MCS10) (Caulobacter maris) protein is Large ribosomal subunit protein bL31.